We begin with the raw amino-acid sequence, 216 residues long: ATP synthase subunit 5, mitochondrial (216 aa).

Belongs to the ATPase delta chain family. As to quaternary structure, F-type ATPases have 2 components, CF(1) - the catalytic core - and CF(0) - the membrane proton channel. CF(1) has five subunits: alpha(3), beta(3), gamma(1), delta(1), epsilon(1). CF(0) has three main subunits: a, b and c.

It localises to the mitochondrion. Its subcellular location is the mitochondrion inner membrane. Mitochondrial membrane ATP synthase (F(1)F(0) ATP synthase or Complex V) produces ATP from ADP in the presence of a proton gradient across the membrane which is generated by electron transport complexes of the respiratory chain. F-type ATPases consist of two structural domains, F(1) - containing the extramembraneous catalytic core and F(0) - containing the membrane proton channel, linked together by a central stalk and a peripheral stalk. During catalysis, ATP synthesis in the catalytic domain of F(1) is coupled via a rotary mechanism of the central stalk subunits to proton translocation. Part of the complex F(0) domain and the peripheric stalk, which acts as a stator to hold the catalytic alpha(3)beta(3) subcomplex and subunit a/ATP6 static relative to the rotary elements. This Schizosaccharomyces pombe (strain 972 / ATCC 24843) (Fission yeast) protein is ATP synthase subunit 5, mitochondrial (atp5).